We begin with the raw amino-acid sequence, 220 residues long: Probable GTP-binding protein EngB (220 aa).

Positions 24-207 constitute an EngB-type G domain; that stretch reads PQPEVAFAGR…HELIESWIAP (184 aa). Residues 32–39, 59–63, 81–84, 148–151, and 185–188 contribute to the GTP site; these read GRSNAGKS, GRTQH, DLPG, TKCD, and LFSA. Mg(2+) is bound by residues Ser39 and Thr61.

This sequence belongs to the TRAFAC class TrmE-Era-EngA-EngB-Septin-like GTPase superfamily. EngB GTPase family. It depends on Mg(2+) as a cofactor.

Its function is as follows. Necessary for normal cell division and for the maintenance of normal septation. This is Probable GTP-binding protein EngB from Paraburkholderia phymatum (strain DSM 17167 / CIP 108236 / LMG 21445 / STM815) (Burkholderia phymatum).